We begin with the raw amino-acid sequence, 188 residues long: Ion-translocating oxidoreductase complex subunit B (188 aa).

The interval 1–26 is hydrophobic; it reads MNGVFLAIGALLPICLAGGALLGYAA. Residues 32-90 enclose the 4Fe-4S domain; that stretch reads QGDPVAEQVNALLPQTQCGQCGYPGCKPYAEAIAAGDKINKCPPGGEATIRALADLLDL. Residues Cys-49, Cys-52, Cys-57, Cys-73, Cys-113, Cys-116, Cys-119, Cys-123, Cys-143, Cys-146, Cys-149, and Cys-153 each coordinate [4Fe-4S] cluster. 2 4Fe-4S ferredoxin-type domains span residues 104 to 133 and 134 to 163; these read RVAY…GAAR and LMHT…MREI.

The protein belongs to the 4Fe4S bacterial-type ferredoxin family. RnfB subfamily. In terms of assembly, the complex is composed of six subunits: RnfA, RnfB, RnfC, RnfD, RnfE and RnfG. The cofactor is [4Fe-4S] cluster.

Its subcellular location is the cell inner membrane. Functionally, part of a membrane-bound complex that couples electron transfer with translocation of ions across the membrane. The chain is Ion-translocating oxidoreductase complex subunit B from Pseudomonas aeruginosa (strain LESB58).